Reading from the N-terminus, the 165-residue chain is Shikimate kinase (165 aa).

Residue 11-16 participates in ATP binding; the sequence is GAGKTT. Thr-15 contributes to the Mg(2+) binding site. Residues Asp-33, Arg-57, and Gly-78 each coordinate substrate. Arg-116 is a binding site for ATP. Substrate is bound at residue Arg-134.

The protein belongs to the shikimate kinase family. Monomer. Mg(2+) is required as a cofactor.

The protein resides in the cytoplasm. The enzyme catalyses shikimate + ATP = 3-phosphoshikimate + ADP + H(+). The protein operates within metabolic intermediate biosynthesis; chorismate biosynthesis; chorismate from D-erythrose 4-phosphate and phosphoenolpyruvate: step 5/7. Catalyzes the specific phosphorylation of the 3-hydroxyl group of shikimic acid using ATP as a cosubstrate. The chain is Shikimate kinase from Bacillus mycoides (strain KBAB4) (Bacillus weihenstephanensis).